A 178-amino-acid chain; its full sequence is Protein GrpE (178 aa).

Residues 1–11 show a composition bias toward basic and acidic residues; sequence MAEDQAPREET. The segment at 1–30 is disordered; it reads MAEDQAPREETVEAPELTEAPEIDELETLR.

It belongs to the GrpE family. As to quaternary structure, homodimer.

It localises to the cytoplasm. Functionally, participates actively in the response to hyperosmotic and heat shock by preventing the aggregation of stress-denatured proteins, in association with DnaK and GrpE. It is the nucleotide exchange factor for DnaK and may function as a thermosensor. Unfolded proteins bind initially to DnaJ; upon interaction with the DnaJ-bound protein, DnaK hydrolyzes its bound ATP, resulting in the formation of a stable complex. GrpE releases ADP from DnaK; ATP binding to DnaK triggers the release of the substrate protein, thus completing the reaction cycle. Several rounds of ATP-dependent interactions between DnaJ, DnaK and GrpE are required for fully efficient folding. In Cereibacter sphaeroides (strain ATCC 17023 / DSM 158 / JCM 6121 / CCUG 31486 / LMG 2827 / NBRC 12203 / NCIMB 8253 / ATH 2.4.1.) (Rhodobacter sphaeroides), this protein is Protein GrpE.